Consider the following 218-residue polypeptide: Octanoyltransferase (218 aa).

A BPL/LPL catalytic domain is found at 27–210 (TGGEDTLYLV…QFLAIFTHPA (184 aa)). Residues 72–79 (RGGNITCH), 139–141 (SIG), and 152–154 (GLA) contribute to the substrate site. Cys170 serves as the catalytic Acyl-thioester intermediate.

The protein belongs to the LipB family.

The protein resides in the cytoplasm. It catalyses the reaction octanoyl-[ACP] + L-lysyl-[protein] = N(6)-octanoyl-L-lysyl-[protein] + holo-[ACP] + H(+). It participates in protein modification; protein lipoylation via endogenous pathway; protein N(6)-(lipoyl)lysine from octanoyl-[acyl-carrier-protein]: step 1/2. In terms of biological role, catalyzes the transfer of endogenously produced octanoic acid from octanoyl-acyl-carrier-protein onto the lipoyl domains of lipoate-dependent enzymes. Lipoyl-ACP can also act as a substrate although octanoyl-ACP is likely to be the physiological substrate. The chain is Octanoyltransferase from Nitratidesulfovibrio vulgaris (strain ATCC 29579 / DSM 644 / CCUG 34227 / NCIMB 8303 / VKM B-1760 / Hildenborough) (Desulfovibrio vulgaris).